Consider the following 276-residue polypeptide: Putative non-heme chloroperoxidase (276 aa).

An AB hydrolase-1 domain is found at 26-263 (PIVLIHGFPL…GGPHAINWTH (238 aa)). Residues Ser99, Asp228, and His257 contribute to the active site.

It belongs to the AB hydrolase superfamily. Bacterial non-heme haloperoxidase / perhydrolase family.

The sequence is that of Putative non-heme chloroperoxidase from Synechocystis sp. (strain ATCC 27184 / PCC 6803 / Kazusa).